Reading from the N-terminus, the 424-residue chain is GDP-fucose protein O-fucosyltransferase 2 (424 aa).

The first 20 residues, 1–20 (MHFFPIQLLVLFFAEKIAFA), serve as a signal peptide directing secretion. 51-55 (GEGFN) is a GDP-beta-L-fucose binding site. E52 acts as the Proton acceptor in catalysis. An intrachain disulfide couples C154 to C187. An N-linked (GlcNAc...) asparagine glycan is attached at N205. Residues 288–290 (HWR), D366, and 383–384 (TF) contribute to the GDP-beta-L-fucose site. C407 and C414 form a disulfide bridge.

It belongs to the glycosyltransferase 68 family. In terms of tissue distribution, expressed in the anterior part of embryos, in the hypodermal and neuronal cells of the head. Expressed at different levels in a variety of cell types after hatching, including neuronal, hypodermal, muscle, intestinal, and somatic gonadal cells. Expressed in the nerve ring around the pharynx, in dorsal and ventral nerve cords, intestine, and a variety of hypodermal cells of L1-L3 larvae. Expressed in gonadal sheath cells, spermatheca, and tissues surrounding the vulva of adult hermaphrodites, and in the body wall muscle and hypodermal cells of adults of both sexes.

The protein localises to the endoplasmic reticulum. It is found in the golgi apparatus. The catalysed reaction is L-seryl-[protein] + GDP-beta-L-fucose = 3-O-(alpha-L-fucosyl)-L-seryl-[protein] + GDP + H(+). The enzyme catalyses L-threonyl-[protein] + GDP-beta-L-fucose = 3-O-(alpha-L-fucosyl)-L-threonyl-[protein] + GDP + H(+). The protein operates within protein modification; protein glycosylation. In terms of biological role, catalyzes the reaction that attaches fucose through an O-glycosidic linkage to a conserved serine or threonine residue in the consensus sequence C1-X-X-S/T-C2 of thrombospondin type I repeats (TSRs) where C1 and C2 are the first and second cysteines of the repeat, respectively. O-fucosylates members of several protein families including the ADAMTS superfamily and the thrombospondin (TSP) and spondin families. The chain is GDP-fucose protein O-fucosyltransferase 2 (pad-2) from Caenorhabditis elegans.